The chain runs to 401 residues: Large ribosomal subunit protein uL4B (401 aa).

The span at 351–373 (IKAKEKKPDDGKPKAKKPLDAKT) shows a compositional bias: basic and acidic residues. The segment at 351–401 (IKAKEKKPDDGKPKAKKPLDAKTKMIKLAKAKKRQARAEAKTAEAKTAESK) is disordered. The span at 374-385 (KMIKLAKAKKRQ) shows a compositional bias: basic residues. Residues 386 to 401 (ARAEAKTAEAKTAESK) are compositionally biased toward basic and acidic residues.

The protein belongs to the universal ribosomal protein uL4 family. Component of the large ribosomal subunit.

The protein resides in the cytoplasm. Functionally, component of the large ribosomal subunit. The ribosome is a large ribonucleoprotein complex responsible for the synthesis of proteins in the cell. This chain is Large ribosomal subunit protein uL4B (rpl4-b), found in Xenopus laevis (African clawed frog).